A 313-amino-acid chain; its full sequence is Protein HEXIM2 (313 aa).

Residues 1–13 are compositionally biased toward polar residues; it reads MATVNHTNCNTAS. The segment at 1-78 is disordered; that stretch reads MATVNHTNCN…RGSRTQSPGG (78 aa). Residues serine 28, serine 52, serine 75, and serine 80 each carry the phosphoserine modification. The segment covering 64–77 has biased composition (polar residues); it reads SSCNIRGSRTQSPG. Disordered regions lie at residues 111–139, 155–194, and 267–313; these read EKQQ…PLAP, PNLD…DFSE, and QENE…AGDR. Over residues 112-131 the composition is skewed to basic and acidic residues; sequence KQQRDERQSQRASRVREEMF. The tract at residues 139-142 is interaction with P-TEFb; it reads PYNT. The span at 179 to 194 shows a compositional bias: basic and acidic residues; that stretch reads GQGRAHGEFQQRDFSE. Residues 207 to 276 adopt a coiled-coil conformation; the sequence is RSKQELVRDY…QENEMWNREG (70 aa). Residues 225–286 form an interaction with CCNT1, HEXIM1 and HEXIM2 region; the sequence is QAEQETRRLR…GYCDQEKPAS (62 aa).

This sequence belongs to the HEXIM family. In terms of assembly, homooligomer and heterooligomer with HEXIM1; probably dimeric. Core component of the 7SK RNP complex, at least composed of 7SK RNA, LARP7, MEPCE, HEXIM1 (or HEXIM2) and P-TEFb (composed of CDK9 and CCNT1/cyclin-T1). Interacts with CCNT2.

The protein localises to the nucleus. In terms of biological role, transcriptional regulator which functions as a general RNA polymerase II transcription inhibitor. Core component of the 7SK RNP complex: in cooperation with 7SK snRNA sequesters P-TEFb in a large inactive 7SK snRNP complex preventing RNA polymerase II phosphorylation and subsequent transcriptional elongation. This Mus musculus (Mouse) protein is Protein HEXIM2 (Hexim2).